Consider the following 529-residue polypeptide: DNA-binding protein (529 aa).

Residues 1-17 are compositionally biased toward basic and acidic residues; sequence MASREEEQRETTPERGR. 2 disordered regions span residues 1–108 and 125–168; these read MASR…VDSE and PVLI…SEST. The segment covering 129–139 has biased composition (basic residues); sequence KHGKGGKRTVR. Residues 140-155 show a composition bias toward basic and acidic residues; that stretch reads RLNEDDPVARGMRTQE. Over residues 156-165 the composition is skewed to acidic residues; sequence EKEESSEAES. A Phosphotyrosine; by host modification is found at Tyr195. Positions 284 and 286 each coordinate Zn(2+). The segment at 297–331 is flexible loop; it reads IEMDVTSENGQRALKEQSSKAKIVKNRWGRNVVQI. The Zn(2+) site is built by Cys339, Cys355, Cys396, Cys398, Cys450, and Cys467. Positions 513 to 529 are C-terminal arm, DBP binding; sequence VSLPVAHSDARQNPFDF.

Belongs to the adenoviridae E2A DNA-binding protein family. As to quaternary structure, homomultimerizes on viral ssDNA bound to pTP. Forms an initiation complex with viral polymerase, pTP and hosts NFIA and POU2F1/OCT1. Interacts with host SRCAP.

The protein localises to the host nucleus. Functionally, plays a role in the elongation phase of viral strand displacement replication by unwinding the template in an ATP-independent fashion, employing its capacity to form multimers. Also enhances the rate of initiation. Released from template upon second strand synthesis. Assembles in complex with viral pTP, viral pol, host NFIA and host POU2F1/OCT1 on viral origin of replication. Covers the whole ssDNA genome during synthesis. The complementary strand synthesis induces its release from DNA template. May inhibit cellular transcription mediated by the interaction between host SRCAP and CBP. This chain is DNA-binding protein, found in Human adenovirus C serotype 2 (HAdV-2).